The following is a 250-amino-acid chain: Triosephosphate isomerase (250 aa).

Residue 9–11 (NWK) participates in substrate binding. Histidine 94 (electrophile) is an active-site residue. The active-site Proton acceptor is glutamate 166. Substrate is bound by residues glycine 172, serine 212, and 233 to 234 (GG).

Belongs to the triosephosphate isomerase family. Homodimer.

Its subcellular location is the cytoplasm. It catalyses the reaction D-glyceraldehyde 3-phosphate = dihydroxyacetone phosphate. It participates in carbohydrate biosynthesis; gluconeogenesis. Its pathway is carbohydrate degradation; glycolysis; D-glyceraldehyde 3-phosphate from glycerone phosphate: step 1/1. In terms of biological role, involved in the gluconeogenesis. Catalyzes stereospecifically the conversion of dihydroxyacetone phosphate (DHAP) to D-glyceraldehyde-3-phosphate (G3P). This Treponema denticola (strain ATCC 35405 / DSM 14222 / CIP 103919 / JCM 8153 / KCTC 15104) protein is Triosephosphate isomerase.